We begin with the raw amino-acid sequence, 261 residues long: 5'-nucleotidase SurE (261 aa).

D8, D9, S43, and N96 together coordinate a divalent metal cation.

The protein belongs to the SurE nucleotidase family. It depends on a divalent metal cation as a cofactor.

The protein localises to the cytoplasm. The catalysed reaction is a ribonucleoside 5'-phosphate + H2O = a ribonucleoside + phosphate. In terms of biological role, nucleotidase that shows phosphatase activity on nucleoside 5'-monophosphates. The protein is 5'-nucleotidase SurE of Cereibacter sphaeroides (strain KD131 / KCTC 12085) (Rhodobacter sphaeroides).